Consider the following 143-residue polypeptide: 3-dehydroquinate dehydratase (143 aa).

Tyrosine 21 (proton acceptor) is an active-site residue. Substrate-binding residues include asparagine 73, histidine 79, and aspartate 86. The Proton donor role is filled by histidine 99. Substrate is bound by residues 100–101 (IS) and arginine 110.

This sequence belongs to the type-II 3-dehydroquinase family. In terms of assembly, homododecamer.

It catalyses the reaction 3-dehydroquinate = 3-dehydroshikimate + H2O. The protein operates within metabolic intermediate biosynthesis; chorismate biosynthesis; chorismate from D-erythrose 4-phosphate and phosphoenolpyruvate: step 3/7. Its function is as follows. Catalyzes a trans-dehydration via an enolate intermediate. The sequence is that of 3-dehydroquinate dehydratase from Deinococcus radiodurans (strain ATCC 13939 / DSM 20539 / JCM 16871 / CCUG 27074 / LMG 4051 / NBRC 15346 / NCIMB 9279 / VKM B-1422 / R1).